The sequence spans 443 residues: sn-2 acyl-lipid omega-3 desaturase (ferredoxin), chloroplastic (443 aa).

A chloroplast-targeting transit peptide spans 1-51; the sequence is MAGLVLSGCAIKPFSQSLPIPTKRFITNPSNINLLHPKDPIFSPNFHGFSR. The next 2 helical transmembrane spans lie at 120-140 and 143-163; these read MSYV…AAHL and WLVW…LFVL. Positions 165 to 169 match the Histidine box-1 motif; the sequence is HDCGH. Residues 201 to 205 carry the Histidine box-2 motif; that stretch reads HRTHH. Helical transmembrane passes span 281-301 and 304-324; these read TICW…VGPV and LKLY…VTYL. The Histidine box-3 motif lies at 368–372; sequence HVIHH.

This sequence belongs to the fatty acid desaturase type 1 family. As to expression, highly expressed in leaves and cotyledons, while no or little expression detected in mature seeds, roots and stems.

It localises to the plastid. The protein resides in the chloroplast membrane. It catalyses the reaction a (7Z,10Z)-hexadecadienoyl-containing glycerolipid + 2 reduced [2Fe-2S]-[ferredoxin] + O2 + 2 H(+) = a (7Z,10Z,13Z)-hexadecatrienoyl-containing glycerolipid + 2 oxidized [2Fe-2S]-[ferredoxin] + 2 H2O. The catalysed reaction is a (9Z,12Z)-octadecadienoyl-containing glycerolipid + 2 reduced [2Fe-2S]-[ferredoxin] + O2 + 2 H(+) = (9Z,12Z,15Z)-octadecatrienoyl-containing glycerolipid + 2 oxidized [2Fe-2S]-[ferredoxin] + 2 H2O. The protein operates within lipid metabolism; polyunsaturated fatty acid biosynthesis. Functionally, chloroplast omega-3 fatty acid desaturase introduces the third double bond in the biosynthesis of 18:3, and probably also 16:3 fatty acids, important constituents of plant membranes. It is thought to use ferredoxin as an electron donor and to act on fatty acids esterified to galactolipids, sulfolipids and phosphatidylglycerol. The polypeptide is sn-2 acyl-lipid omega-3 desaturase (ferredoxin), chloroplastic (Helianthus annuus (Common sunflower)).